The sequence spans 1057 residues: MPKRNDIKTILVIGSGPIIIGQAAEFDYAGTQACLALKEEGYRVILVNSNPATIMTDKEIADKVYIEPLTHDFIARIIRKEQPDALLPTLGGQTGLNMAIQLHESGVLQDNNVQLLGTELTSIQQAEDREMFRTLMNDLNVPVPESDIVNTVEQAFKFKEQVGYPLIVRPAFTMGGTGGGICHNDEELHEIVSNGLHYSPATQCLLEKSIAGFKEIEYEVMRDKNDNAIVVCNMENIDPVGIHTGDSIVVAPSQTLSDVEYQMLRDVSLKVIRALGIEGGCNVQLALDPHSFDYYIIEVNPRVSRSSALASKATGYPIAKLAAKIAVGLTLDEMLNPITGTSYAAFEPTLDYVISKIPRFPFDKFEKGERELGTQMKATGEVMAIGRTYEESLLKAIRSLEYGVHHLGLPNGESFDLDYIKERISHQDDERLFFIGEAIRRGTTLEEIHNMTQIDYFFLHKFQNIIDIEHQLKEHQGDLEYLKYAKDYGFSDKTIAHRFNMTEEEVYQLRMENDIKPVYKMVDTCAAEFESSTPYYYGTYETENESIVTDKEKILVLGSGPIRIGQGVEFDYATVHAVWAIQKAGYEAIIVNNNPETVSTDFSISDKLYFEPLTEEDVMNIINLEKPKGVVVQFGGQTAINLADKLAKHGVKILGTSLENLNRAEDRKEFEALLRKINVPQPQGKTATSPEEALANAAEIGYPVVVRPSYVLGGRAMEIVDNDKELENYMTQAVKASPEHPVLVDRYLTGKEIEVDAICDGETVIIPGIMEHIERAGVHSGDSIAVYPPQTLTEDELATLEDYTIKLAKGINIIGLINIQFVIAHDGVYVLEVNPRSSRTVPFLSKITDIPMAQLAMRAIIGEKLTDMGYQEGVQPYAEGVFVKAPVFSFNKLKNVDITLGPEMKSTGEVMGKDTTLEKALFKGLTGSGVEVKDHGTVLMTVSDKDKEEVVKLAQRLNEVGYKILATSGTANKLAEYDIPAEVVGKIGGENDLLTRIQNGDVQIVINTMTKGKEVERDGFQIRRTTVENGIPCLTSLDTANALTNVIESMTFTMRQM.

The tract at residues 1–401 (MPKRNDIKTI…SLLKAIRSLE (401 aa)) is carboxyphosphate synthetic domain. Arg129, Arg169, Gly175, Gly176, Lys208, Ile210, Glu215, Gly241, Ile242, His243, Gln284, and Glu298 together coordinate ATP. The ATP-grasp 1 domain occupies 133 to 327 (RTLMNDLNVP…IAKLAAKIAV (195 aa)). Residues Gln284, Glu298, and Asn300 each contribute to the Mg(2+) site. Mn(2+) is bound by residues Gln284, Glu298, and Asn300. Residues 402–546 (YGVHHLGLPN…YGTYETENES (145 aa)) form an oligomerization domain region. The interval 547-929 (IVTDKEKILV…ALFKGLTGSG (383 aa)) is carbamoyl phosphate synthetic domain. One can recognise an ATP-grasp 2 domain in the interval 671-861 (EALLRKINVP…MAQLAMRAII (191 aa)). Arg707, Arg746, Leu748, Glu752, Gly777, Val778, His779, Ser780, Gln820, and Glu832 together coordinate ATP. 3 residues coordinate Mg(2+): Gln820, Glu832, and Asn834. Gln820, Glu832, and Asn834 together coordinate Mn(2+). Positions 930–1057 (VEVKDHGTVL…ESMTFTMRQM (128 aa)) constitute an MGS-like domain. Positions 930–1057 (VEVKDHGTVL…ESMTFTMRQM (128 aa)) are allosteric domain.

It belongs to the CarB family. Composed of two chains; the small (or glutamine) chain promotes the hydrolysis of glutamine to ammonia, which is used by the large (or ammonia) chain to synthesize carbamoyl phosphate. Tetramer of heterodimers (alpha,beta)4. It depends on Mg(2+) as a cofactor. Requires Mn(2+) as cofactor.

The enzyme catalyses hydrogencarbonate + L-glutamine + 2 ATP + H2O = carbamoyl phosphate + L-glutamate + 2 ADP + phosphate + 2 H(+). It catalyses the reaction hydrogencarbonate + NH4(+) + 2 ATP = carbamoyl phosphate + 2 ADP + phosphate + 2 H(+). It participates in amino-acid biosynthesis; L-arginine biosynthesis; carbamoyl phosphate from bicarbonate: step 1/1. It functions in the pathway pyrimidine metabolism; UMP biosynthesis via de novo pathway; (S)-dihydroorotate from bicarbonate: step 1/3. Its function is as follows. Large subunit of the glutamine-dependent carbamoyl phosphate synthetase (CPSase). CPSase catalyzes the formation of carbamoyl phosphate from the ammonia moiety of glutamine, carbonate, and phosphate donated by ATP, constituting the first step of 2 biosynthetic pathways, one leading to arginine and/or urea and the other to pyrimidine nucleotides. The large subunit (synthetase) binds the substrates ammonia (free or transferred from glutamine from the small subunit), hydrogencarbonate and ATP and carries out an ATP-coupled ligase reaction, activating hydrogencarbonate by forming carboxy phosphate which reacts with ammonia to form carbamoyl phosphate. In Staphylococcus aureus (strain MW2), this protein is Carbamoyl phosphate synthase large chain.